The sequence spans 234 residues: Small ribosomal subunit protein uS3 (234 aa).

Positions 39-109 (IRTLINKHYG…EVRIAIYEVK (71 aa)) constitute a KH type-2 domain.

It belongs to the universal ribosomal protein uS3 family. Part of the 30S ribosomal subunit. Forms a tight complex with proteins S10 and S14.

Functionally, binds the lower part of the 30S subunit head. Binds mRNA in the 70S ribosome, positioning it for translation. The sequence is that of Small ribosomal subunit protein uS3 from Coprothermobacter proteolyticus (strain ATCC 35245 / DSM 5265 / OCM 4 / BT).